Here is a 294-residue protein sequence, read N- to C-terminus: Ribosomal RNA small subunit methyltransferase H (294 aa).

Residues 37–39 (GGH), D58, L93, D105, and Q112 each bind S-adenosyl-L-methionine.

It belongs to the methyltransferase superfamily. RsmH family.

The protein localises to the cytoplasm. The catalysed reaction is cytidine(1402) in 16S rRNA + S-adenosyl-L-methionine = N(4)-methylcytidine(1402) in 16S rRNA + S-adenosyl-L-homocysteine + H(+). In terms of biological role, specifically methylates the N4 position of cytidine in position 1402 (C1402) of 16S rRNA. The sequence is that of Ribosomal RNA small subunit methyltransferase H from Fervidobacterium nodosum (strain ATCC 35602 / DSM 5306 / Rt17-B1).